The primary structure comprises 374 residues: Glutamate 5-kinase (374 aa).

Lys16 lines the ATP pocket. Ser56, Asp143, and Asn155 together coordinate substrate. ATP is bound at residue 175-176; sequence TD. Residues 282–360 form the PUA domain; that stretch reads KGCFVVDEGA…TRIEEILGYV (79 aa).

The protein belongs to the glutamate 5-kinase family.

It localises to the cytoplasm. It carries out the reaction L-glutamate + ATP = L-glutamyl 5-phosphate + ADP. It functions in the pathway amino-acid biosynthesis; L-proline biosynthesis; L-glutamate 5-semialdehyde from L-glutamate: step 1/2. In terms of biological role, catalyzes the transfer of a phosphate group to glutamate to form L-glutamate 5-phosphate. The sequence is that of Glutamate 5-kinase from Methylococcus capsulatus (strain ATCC 33009 / NCIMB 11132 / Bath).